An 85-amino-acid chain; its full sequence is U4-theraphotoxin-Hhn1t (85 aa).

The N-terminal stretch at 1–22 (MKVTLIAILTCAAVLVLHTTAA) is a signal peptide. Positions 23 to 48 (EELEAESQLMEVGMPDTELAAVDEER) are excised as a propeptide. 3 disulfide bridges follow: C52/C66, C56/C77, and C71/C82.

It belongs to the neurotoxin 12 (Hwtx-2) family. 02 (Hwtx-2) subfamily. Expressed by the venom gland.

It localises to the secreted. Its function is as follows. Postsynaptic neurotoxin. This chain is U4-theraphotoxin-Hhn1t, found in Cyriopagopus hainanus (Chinese bird spider).